A 428-amino-acid chain; its full sequence is ATP-dependent RNA helicase RhlB (428 aa).

The Q motif signature appears at 9 to 37; sequence QKFSDFALHPLVVEALENKGFQYCTPIQA. The 180-residue stretch at 40–219 folds into the Helicase ATP-binding domain; sequence LPLTLSGRDV…FEQMNNAEYV (180 aa). An ATP-binding site is contributed by 53-60; it reads AQTGTGKT. A DEAD box motif is present at residues 165 to 168; that stretch reads DEAD. In terms of domain architecture, Helicase C-terminal spans 245–390; that stretch reads RLLQTLIEEE…VSKYNSDALL (146 aa). The interval 394–428 is disordered; that stretch reads PAPKRLARTRTGNGPRRNSAPRRSGAPRNNRKRPG.

Belongs to the DEAD box helicase family. RhlB subfamily. In terms of assembly, component of the RNA degradosome, which is a multiprotein complex involved in RNA processing and mRNA degradation.

The protein resides in the cytoplasm. The catalysed reaction is ATP + H2O = ADP + phosphate + H(+). Its function is as follows. DEAD-box RNA helicase involved in RNA degradation. Has RNA-dependent ATPase activity and unwinds double-stranded RNA. The sequence is that of ATP-dependent RNA helicase RhlB from Yersinia pseudotuberculosis serotype O:1b (strain IP 31758).